Here is a 277-residue protein sequence, read N- to C-terminus: Phosphatidylglycerol--prolipoprotein diacylglyceryl transferase (277 aa).

4 helical membrane passes run 11-31, 55-75, 93-113, and 117-137; these read IIFSIGSFKAHWYGFMYLISF, LLYIIFISSCIGGRIGYIIFY, GGMSFHGGLIGAIIAMYYLSL, and VKILKISDFIVPLVPFGLGAG. Arg138 contacts a 1,2-diacyl-sn-glycero-3-phospho-(1'-sn-glycerol). Helical transmembrane passes span 192-212, 220-240, and 256-276; these read PSQLYEFFLEGIFLFFIIYFF, GSISALFLISYGILRIISEFF, and MGQILSIPMIIIGVLYVNLFI.

This sequence belongs to the Lgt family.

The protein localises to the cell inner membrane. It carries out the reaction L-cysteinyl-[prolipoprotein] + a 1,2-diacyl-sn-glycero-3-phospho-(1'-sn-glycerol) = an S-1,2-diacyl-sn-glyceryl-L-cysteinyl-[prolipoprotein] + sn-glycerol 1-phosphate + H(+). The protein operates within protein modification; lipoprotein biosynthesis (diacylglyceryl transfer). Catalyzes the transfer of the diacylglyceryl group from phosphatidylglycerol to the sulfhydryl group of the N-terminal cysteine of a prolipoprotein, the first step in the formation of mature lipoproteins. In Buchnera aphidicola subsp. Schizaphis graminum (strain Sg), this protein is Phosphatidylglycerol--prolipoprotein diacylglyceryl transferase.